We begin with the raw amino-acid sequence, 366 residues long: Terpene synthase 4 (366 aa).

Residues 91–96 (DDFLER) carry the DDxx(x)D/E motif motif. Positions 241–249 (NDCVSYAKE) match the NDxxSxxxD/E motif motif.

It belongs to the terpene synthase family.

It catalyses the reaction (2E,6E)-farnesyl diphosphate = (1S,2S,4R)-beta-elemene + diphosphate. In terms of biological role, terpene synthase that converts its substrate farnesyl diphosphate (FPP) into the sesquiterpenes bicycloelemene, beta-elemene and 2 yet unidentified sesquiterpenes. The polypeptide is Terpene synthase 4 (Dictyostelium purpureum (Slime mold)).